The following is a 456-amino-acid chain: MRYLPLTDADRSAMLARIGAASIDDLFVDVPEAARLAGPIAGLPAHASELAVERHMSRLARRNLSAGEAPFFLGCGAYRHHVPASVDHLIQRGEFLTSYTPYQPEIAQGTLQALFEFQTQVARLFGCDVANASMYDGSTACWEAITMARRVTKRDKAILSAGLHPHYVSLAKTMARFTGDRLDAAIPDLTPGAPGDDMARLLAAIDGETSCVVVQNPNILGHVADLSELAARCHEKGALLVAVVTEPVALGAIRSPGEMGADIVVGEGQSIGVGLNFGGPYVGLFACAEKHVRQMPGRLAGVTADADGQRGFVLTLSTREQHIRREKATSNICTNAGLCALAFSVHLTLLGETGLRRLAELNHAGAVAAAERLAQVPGVELVNGAFFNEFTLKLPREARPVVRSLADKGILGGVSLGRLYPGEAALAGGLVVAVTETASAEDVETLAQALEAEIAA.

The protein belongs to the GcvP family. N-terminal subunit subfamily. In terms of assembly, the glycine cleavage system is composed of four proteins: P, T, L and H. In this organism, the P 'protein' is a heterodimer of two subunits.

The catalysed reaction is N(6)-[(R)-lipoyl]-L-lysyl-[glycine-cleavage complex H protein] + glycine + H(+) = N(6)-[(R)-S(8)-aminomethyldihydrolipoyl]-L-lysyl-[glycine-cleavage complex H protein] + CO2. In terms of biological role, the glycine cleavage system catalyzes the degradation of glycine. The P protein binds the alpha-amino group of glycine through its pyridoxal phosphate cofactor; CO(2) is released and the remaining methylamine moiety is then transferred to the lipoamide cofactor of the H protein. In Rhizorhabdus wittichii (strain DSM 6014 / CCUG 31198 / JCM 15750 / NBRC 105917 / EY 4224 / RW1) (Sphingomonas wittichii), this protein is Probable glycine dehydrogenase (decarboxylating) subunit 1.